The chain runs to 209 residues: Protein GrpE (209 aa).

A compositionally biased stretch (polar residues) spans 1-13 (MSNDSSKAKQNQV). The tract at residues 1-27 (MSNDSSKAKQNQVDEAVEGEIITDNEN) is disordered. The span at 15 to 27 (EAVEGEIITDNEN) shows a compositional bias: acidic residues.

It belongs to the GrpE family. As to quaternary structure, homodimer.

It is found in the cytoplasm. Participates actively in the response to hyperosmotic and heat shock by preventing the aggregation of stress-denatured proteins, in association with DnaK and GrpE. It is the nucleotide exchange factor for DnaK and may function as a thermosensor. Unfolded proteins bind initially to DnaJ; upon interaction with the DnaJ-bound protein, DnaK hydrolyzes its bound ATP, resulting in the formation of a stable complex. GrpE releases ADP from DnaK; ATP binding to DnaK triggers the release of the substrate protein, thus completing the reaction cycle. Several rounds of ATP-dependent interactions between DnaJ, DnaK and GrpE are required for fully efficient folding. The sequence is that of Protein GrpE from Shewanella sediminis (strain HAW-EB3).